The sequence spans 498 residues: Glycerol kinase (498 aa).

ADP is bound at residue Thr12. 3 residues coordinate ATP: Thr12, Thr13, and Ser14. Thr12 is a sn-glycerol 3-phosphate binding site. Arg16 is an ADP binding site. Sn-glycerol 3-phosphate-binding residues include Arg82, Glu83, Tyr134, and Asp244. Residues Arg82, Glu83, Tyr134, Asp244, and Gln245 each contribute to the glycerol site. Residues Thr266 and Gly310 each contribute to the ADP site. ATP is bound by residues Thr266, Gly310, Gln314, and Gly411. Residues Gly411 and Asn415 each contribute to the ADP site.

Belongs to the FGGY kinase family.

It carries out the reaction glycerol + ATP = sn-glycerol 3-phosphate + ADP + H(+). The protein operates within polyol metabolism; glycerol degradation via glycerol kinase pathway; sn-glycerol 3-phosphate from glycerol: step 1/1. Its activity is regulated as follows. Inhibited by fructose 1,6-bisphosphate (FBP). In terms of biological role, key enzyme in the regulation of glycerol uptake and metabolism. Catalyzes the phosphorylation of glycerol to yield sn-glycerol 3-phosphate. The sequence is that of Glycerol kinase from Chloroflexus aggregans (strain MD-66 / DSM 9485).